Reading from the N-terminus, the 1758-residue chain is Y' element ATP-dependent helicase YJL225C (1758 aa).

Residues 668–845 enclose the Helicase ATP-binding domain; that stretch reads EIYMADTPSV…LQRIGLTGLA (178 aa). Residue 681–688 participates in ATP binding; that stretch reads APPGYGKT. Residues 900-1051 enclose the Helicase C-terminal domain; the sequence is ALKLLLALFE…EFYGLESKKG (152 aa). Residues 1142–1360 are compositionally biased toward low complexity; that stretch reads NVRTNATTNA…ATTTESTNAS (219 aa). The disordered stretch occupies residues 1142 to 1384; that stretch reads NVRTNATTNA…RFHPVTDINK (243 aa). The segment covering 1361-1384 has biased composition (basic and acidic residues); the sequence is AKEDANKDGNAEDNRFHPVTDINK.

This sequence belongs to the helicase family. Yeast subtelomeric Y' repeat subfamily.

Catalyzes DNA unwinding and is involved in telomerase-independent telomere maintenance. The protein is Y' element ATP-dependent helicase YJL225C of Saccharomyces cerevisiae (strain ATCC 204508 / S288c) (Baker's yeast).